The chain runs to 130 residues: Small ribosomal subunit protein uS11 (130 aa).

It belongs to the universal ribosomal protein uS11 family. As to quaternary structure, part of the 30S ribosomal subunit. Interacts with proteins S7 and S18. Binds to IF-3.

Located on the platform of the 30S subunit, it bridges several disparate RNA helices of the 16S rRNA. Forms part of the Shine-Dalgarno cleft in the 70S ribosome. This is Small ribosomal subunit protein uS11 from Gluconobacter oxydans (strain 621H) (Gluconobacter suboxydans).